The sequence spans 409 residues: Methylthioribose-1-phosphate isomerase (409 aa).

Residue Asp-277 is the Proton donor of the active site.

It belongs to the eIF-2B alpha/beta/delta subunits family. MtnA subfamily.

The protein resides in the cytoplasm. The protein localises to the nucleus. It carries out the reaction 5-(methylsulfanyl)-alpha-D-ribose 1-phosphate = 5-(methylsulfanyl)-D-ribulose 1-phosphate. The protein operates within amino-acid biosynthesis; L-methionine biosynthesis via salvage pathway; L-methionine from S-methyl-5-thio-alpha-D-ribose 1-phosphate: step 1/6. Catalyzes the interconversion of methylthioribose-1-phosphate (MTR-1-P) into methylthioribulose-1-phosphate (MTRu-1-P). The sequence is that of Methylthioribose-1-phosphate isomerase from Scheffersomyces stipitis (strain ATCC 58785 / CBS 6054 / NBRC 10063 / NRRL Y-11545) (Yeast).